The sequence spans 312 residues: Olfactory receptor 2L2 (312 aa).

Residues 1–24 (MENYNQTSTDFILLGLFPQSRIGL) are Extracellular-facing. Asn-5 is a glycosylation site (N-linked (GlcNAc...) asparagine). The chain crosses the membrane as a helical span at residues 25-48 (FVFTLIFLIFLMALIGNLSMILLI). Residues 49-56 (FLDIHLHT) are Cytoplasmic-facing. Residues 57 to 78 (PMYFLLSQLSLIDLNYISTIVP) traverse the membrane as a helical segment. Residues 79-99 (KMVYDFLYGNKSISFTGCGIQ) lie on the Extracellular side of the membrane. Asn-88 carries N-linked (GlcNAc...) asparagine glycosylation. Cys-96 and Cys-188 form a disulfide bridge. Residues 100–119 (SFFFLTLAVAEGLLLTSMAY) form a helical membrane-spanning segment. Residues 120–138 (DRYVAICFPLHYPIRISKR) are Cytoplasmic-facing. A helical transmembrane segment spans residues 139 to 157 (VCVMMITGSWMISSINSCA). Topologically, residues 158–194 (HTVYALCIPYCKSRAINHFFCDVPAMLTLACTDTWVY) are extracellular. The chain crosses the membrane as a helical span at residues 195 to 218 (ESTVFLSSTIFLVLPFTGIACSYG). At 219–235 (RVLLAVYRMHSAEGRKK) the chain is on the cytoplasmic side. The helical transmembrane segment at 236–258 (AYSTCSTHLTVVSFYYAPFAYTY) threads the bilayer. Over 259 to 271 (VRPRSLRSPTEDK) the chain is Extracellular. Residues 272–291 (ILAVFYTILTPMLNPIIYSL) traverse the membrane as a helical segment. At 292–312 (RNKEVMGALTQVIQKIFSVKM) the chain is on the cytoplasmic side.

This sequence belongs to the G-protein coupled receptor 1 family.

It localises to the cell membrane. Its function is as follows. Odorant receptor. In Homo sapiens (Human), this protein is Olfactory receptor 2L2 (OR2L2).